Consider the following 214-residue polypeptide: Large ribosomal subunit protein uL3 (214 aa).

The interval 134 to 161 is disordered; sequence THGNSLSHRAPGSIGQCQTPGRVMKGKK. N5-methylglutamine is present on Gln-151.

Belongs to the universal ribosomal protein uL3 family. As to quaternary structure, part of the 50S ribosomal subunit. Forms a cluster with proteins L14 and L19. In terms of processing, methylated by PrmB.

Its function is as follows. One of the primary rRNA binding proteins, it binds directly near the 3'-end of the 23S rRNA, where it nucleates assembly of the 50S subunit. The chain is Large ribosomal subunit protein uL3 from Teredinibacter turnerae (strain ATCC 39867 / T7901).